The primary structure comprises 437 residues: Tryptophan--tRNA ligase (437 aa).

The 'HIGH' region motif lies at 74–82 (PSGKVHLGH). The 'KMSKS' region motif lies at 321–325 (KMSSS).

This sequence belongs to the class-I aminoacyl-tRNA synthetase family.

The protein resides in the cytoplasm. It catalyses the reaction tRNA(Trp) + L-tryptophan + ATP = L-tryptophyl-tRNA(Trp) + AMP + diphosphate + H(+). The chain is Tryptophan--tRNA ligase from Methanosarcina acetivorans (strain ATCC 35395 / DSM 2834 / JCM 12185 / C2A).